A 243-amino-acid chain; its full sequence is Ubiquinone biosynthesis O-methyltransferase (243 aa).

S-adenosyl-L-methionine-binding residues include Arg-45, Gly-65, Asp-86, and Leu-130.

The protein belongs to the methyltransferase superfamily. UbiG/COQ3 family.

The enzyme catalyses a 3-demethylubiquinol + S-adenosyl-L-methionine = a ubiquinol + S-adenosyl-L-homocysteine + H(+). It catalyses the reaction a 3-(all-trans-polyprenyl)benzene-1,2-diol + S-adenosyl-L-methionine = a 2-methoxy-6-(all-trans-polyprenyl)phenol + S-adenosyl-L-homocysteine + H(+). It functions in the pathway cofactor biosynthesis; ubiquinone biosynthesis. In terms of biological role, O-methyltransferase that catalyzes the 2 O-methylation steps in the ubiquinone biosynthetic pathway. The polypeptide is Ubiquinone biosynthesis O-methyltransferase (Idiomarina loihiensis (strain ATCC BAA-735 / DSM 15497 / L2-TR)).